Consider the following 423-residue polypeptide: Glucose-1-phosphate adenylyltransferase (423 aa).

Alpha-D-glucose 1-phosphate is bound by residues Y108, G173, 188-189, and S207; that span reads EK.

The protein belongs to the bacterial/plant glucose-1-phosphate adenylyltransferase family. Homotetramer.

It carries out the reaction alpha-D-glucose 1-phosphate + ATP + H(+) = ADP-alpha-D-glucose + diphosphate. Its pathway is glycan biosynthesis; glycogen biosynthesis. Its function is as follows. Involved in the biosynthesis of ADP-glucose, a building block required for the elongation reactions to produce glycogen. Catalyzes the reaction between ATP and alpha-D-glucose 1-phosphate (G1P) to produce pyrophosphate and ADP-Glc. The protein is Glucose-1-phosphate adenylyltransferase of Francisella tularensis subsp. tularensis (strain WY96-3418).